Here is a 376-residue protein sequence, read N- to C-terminus: Alanine racemase (376 aa).

The active-site Proton acceptor; specific for D-alanine is K44. K44 carries the post-translational modification N6-(pyridoxal phosphate)lysine. R139 lines the substrate pocket. Residue Y271 is the Proton acceptor; specific for L-alanine of the active site. Residue M319 participates in substrate binding.

It belongs to the alanine racemase family. Pyridoxal 5'-phosphate serves as cofactor.

It carries out the reaction L-alanine = D-alanine. It functions in the pathway amino-acid biosynthesis; D-alanine biosynthesis; D-alanine from L-alanine: step 1/1. Functionally, catalyzes the interconversion of L-alanine and D-alanine. May also act on other amino acids. The chain is Alanine racemase (alr) from Bordetella petrii (strain ATCC BAA-461 / DSM 12804 / CCUG 43448).